Consider the following 196-residue polypeptide: Protein TEX261 (196 aa).

5 helical membrane-spanning segments follow: residues 3–23, 42–62, 70–90, 97–117, and 125–145; these read FMYL…TLAV, SRII…LYVF, IGVG…FPFI, FILS…FFAE, and VLAY…VSLS.

It belongs to the SVP26 family.

It localises to the membrane. The chain is Protein TEX261 (TEX261) from Homo sapiens (Human).